A 305-amino-acid polypeptide reads, in one-letter code: Transmembrane epididymal protein 1 (305 aa).

Residues 4 to 24 traverse the membrane as a helical segment; it reads FIGHISPGLFLVFYGLYQAII. Asparagine 32 carries an N-linked (GlcNAc...) asparagine glycan. The next 6 membrane-spanning stretches (helical) occupy residues 51–71, 100–120, 124–144, 159–179, 187–207, and 223–243; these read LWQI…LIVY, LTMF…RSVL, LVLL…LLLV, SLLI…LWAP, IETF…FILF, and IMLV…CMLG. The tract at residues 285-305 is disordered; the sequence is EQQDRDDQAPLLSKSSPCDRA.

It belongs to the TMEM45 family.

The protein localises to the membrane. The chain is Transmembrane epididymal protein 1 (Teddm1) from Rattus norvegicus (Rat).